The following is a 391-amino-acid chain: F-box protein At2g34280 (391 aa).

One can recognise an F-box domain in the interval 1 to 43 (MDLLPYDVVEHILERLDVKSLLNCKSVSKQWRSTIRCRAFQER).

In Arabidopsis thaliana (Mouse-ear cress), this protein is F-box protein At2g34280.